A 123-amino-acid chain; its full sequence is Small ribosomal subunit protein uS12cz/uS12cy (123 aa).

The protein belongs to the universal ribosomal protein uS12 family. In terms of assembly, part of the 30S ribosomal subunit.

Its subcellular location is the plastid. It is found in the chloroplast. Its function is as follows. With S4 and S5 plays an important role in translational accuracy. Located at the interface of the 30S and 50S subunits. The sequence is that of Small ribosomal subunit protein uS12cz/uS12cy (rps12-A) from Glycine max (Soybean).